The primary structure comprises 497 residues: Glycine receptor subunit beta (497 aa).

The first 22 residues, 1 to 22 (MKFLLTTAFLILISLWVEEAYS), serve as a signal peptide directing secretion. The Extracellular segment spans residues 23-268 (KEKSSKKGKG…IFTLRRQVGF (246 aa)). An N-linked (GlcNAc...) asparagine glycan is attached at asparagine 54. The glycine site is built by arginine 108 and serine 174. Residues cysteine 183 and cysteine 197 are joined by a disulfide bond. A glycan (N-linked (GlcNAc...) asparagine) is linked at asparagine 242. An intrachain disulfide couples cysteine 243 to cysteine 255. Threonine 250 lines the glycine pocket. Residues 269–289 (YMMGVYAPTLLIVVLSWLSFW) traverse the membrane as a helical segment. Residues 290–294 (INPDA) are Cytoplasmic-facing. A helical transmembrane segment spans residues 295–315 (SAARVPLGIFSVLSLASECTT). Residues 316–327 (LAAELPKVSYVK) lie on the Extracellular side of the membrane. A helical membrane pass occupies residues 328–349 (ALDVWLIACLLFGFASLVEYAV). At 350-472 (VQVMLNNPKR…KPVIPTAAKR (123 aa)) the chain is on the cytoplasmic side. Threonine 391 is modified (phosphothreonine). Residues 473-496 (IDLYARALFPFCFLFFNVIYWSIY) form a helical membrane-spanning segment.

This sequence belongs to the ligand-gated ion channel (TC 1.A.9) family. Glycine receptor (TC 1.A.9.3) subfamily. GLRB sub-subfamily. As to quaternary structure, forms heteropentamers with glycin receptor alpha subunits. Heteropentamers with GLRA1 can be composed of two GLRA1 and three GLRB subunits, or three GLRA1 and two GLRB subunits, or four GLRA1 subunits and one GLRB subunit. Forms heteropentamers with GLRA2. Functional GLRB-GLRA2 heteropentamers contain four GLRA2 subunits and one GLRB subunit, although alternative subunit composition cannot be excluded. Forms a heteropentamer with GLRA3. Interacts with GPHN.

Its subcellular location is the postsynaptic cell membrane. The protein localises to the synapse. It is found in the cell projection. It localises to the dendrite. The protein resides in the cell membrane. Its subcellular location is the cytoplasm. The enzyme catalyses chloride(in) = chloride(out). Its activity is regulated as follows. Channel opening is triggered by extracellular glycine. Heteropentameric channels composed of GLRB and GLRA1 are activated by lower glycine levels than homopentameric GLRA1. Functionally, subunit of heteromeric glycine-gated chloride channels. Plays an important role in the down-regulation of neuronal excitability. Contributes to the generation of inhibitory postsynaptic currents. This is Glycine receptor subunit beta (GLRB) from Homo sapiens (Human).